Here is a 233-residue protein sequence, read N- to C-terminus: Zinc import ATP-binding protein ZnuC (233 aa).

In terms of domain architecture, ABC transporter spans 6-222 (IEFRNVSKKF…SEFSNALSSL (217 aa)). 38–45 (GPNGAGKT) provides a ligand contact to ATP.

Belongs to the ABC transporter superfamily. Zinc importer (TC 3.A.1.15.5) family. In terms of assembly, the complex is composed of two ATP-binding proteins (ZnuC), two transmembrane proteins (ZnuB) and a solute-binding protein (ZnuA).

The protein localises to the cell inner membrane. The enzyme catalyses Zn(2+)(out) + ATP(in) + H2O(in) = Zn(2+)(in) + ADP(in) + phosphate(in) + H(+)(in). Its function is as follows. Part of the ABC transporter complex ZnuABC involved in zinc import. Responsible for energy coupling to the transport system. This is Zinc import ATP-binding protein ZnuC from Rickettsia prowazekii (strain Madrid E).